The sequence spans 433 residues: C2H2 type master regulator of conidiophore development brlA (433 aa).

Disordered regions lie at residues 24–49 (SDCPSMTSSFSPLDSPTPTPTSLYSQ), 240–269 (KSHTPSTPHRSVSMGTPSGSDTPVSRISGH), and 286–306 (MMQRHRQPSRKPSKKQLLRSN). The segment covering 30–49 (TSSFSPLDSPTPTPTSLYSQ) has biased composition (low complexity). A compositionally biased stretch (polar residues) spans 240–264 (KSHTPSTPHRSVSMGTPSGSDTPVS). Basic residues predominate over residues 288 to 302 (QRHRQPSRKPSKKQL). 2 C2H2-type zinc fingers span residues 321–345 (FKCKEPGCKGRFKRQEHLKRHMKSH) and 351–376 (HVCWVPGCHRAFSRSDNLNAHYTKTH). The segment at 391-423 (ETSQDFDPDFRGQLTPDGRPIYGSKLEDSMPDC) is disordered.

The protein localises to the nucleus. BrlA, abaA and wetA are pivotal regulators of conidiophore development and conidium maturation. They act individually and together to regulate their own expression and that of numerous other sporulation-specific genes. Binds promoters of target genes at brlA response elements (BREs) containing the conserved sequence 5'-(C/A)(A/G)AGGG(G/A)-3'. Regulates genes involved in conidiogenesis. This chain is C2H2 type master regulator of conidiophore development brlA, found in Penicillium digitatum (strain PHI26 / CECT 20796) (Green mold).